The sequence spans 777 residues: MDSKESLTPGKEENPSSVLTQERGNVMDFSKILRGGATLKVSVSSTSLAAASQSDSKQQRLLVDFPKGSVSNAQQPDLSKAVSLSMGLYMGETETKVMGNDLGFPQQGQISLSSGETDLQLLEESIANLNRSTSVPENPKSSASSSVSAAPKEKEFPKTHSDVSSEQQNLKGQTGTNGGNVKLYTADQSTFDILQDLEFSSGSPGKETNQSPWRSDLLIDENCLLSPLAGEEDSFLLEGNSNEDCKPLILPDTKPKIKDNGDLVLSSSSNVTLPQVKTEKEDFIELCTPGVIKQEKLSTVYCQASFPGANVIGNKMSAISIHGVSTSGGQMYHYDMNTASLSQQQDQKPIFNVIPPIPVGSENWNRCQGSGDDNLTSLGTLNFPGRTVFSNGYSSPSMRPDVSSPPSSSSTATTGPPPKLCLVCSDEASGCHYGVLTCGSCKVFFKRAVEGQHNYLCAGRNDCIIDKIRRKNCPACRYRKCLQAGMNLEARKTKKKIKGIQQATTGVSQETSENPANKTIVPATLPQLTPTLVSLLEVIEPEVLYAGYDSTVPDSTWRIMTTLNMLGGRQVIAAVKWAKAIPGFRNLHLDDQMTLLQYSWMFLMAFALGWRSYRQASSNLLCFAPDLIINEQRMTLPCMYDQCKHMLYVSSELHRLQVSYEEYLCMKTLLLLSSVPKDGLKSQELFDEIRMTYIKELGKAIVKREGNSSQNWQRFYQLTKLLDSMHEVVENLLNYCFQTFLDKTMSIEFPEMLAEIITNQLPKYSNGNIKKLLFHQK.

Over residues 1 to 14 (MDSKESLTPGKEEN) the composition is skewed to basic and acidic residues. The disordered stretch occupies residues 1 to 23 (MDSKESLTPGKEENPSSVLTQER). The modulating stretch occupies residues 1–420 (MDSKESLTPG…TATTGPPPKL (420 aa)). Threonine 8 is modified (phosphothreonine). Arginine 23 carries the post-translational modification Omega-N-methylarginine. Phosphoserine occurs at positions 45, 113, 134, and 141. Residues 130–182 (NRSTSVPENPKSSASSSVSAAPKEKEFPKTHSDVSSEQQNLKGQTGTNGGNVK) are disordered. Residues 134 to 150 (SVPENPKSSASSSVSAA) are compositionally biased toward low complexity. Positions 151–163 (PKEKEFPKTHSDV) are enriched in basic and acidic residues. Residues 164–174 (SSEQQNLKGQT) show a composition bias toward polar residues. Phosphoserine is present on residues serine 203, serine 211, and serine 226. Lysine 258 participates in a covalent cross-link: Glycyl lysine isopeptide (Lys-Gly) (interchain with G-Cter in SUMO2). A Phosphoserine modification is found at serine 267. Glycyl lysine isopeptide (Lys-Gly) (interchain with G-Cter in SUMO); alternate cross-links involve residues lysine 277 and lysine 293. Residues lysine 277 and lysine 293 each participate in a glycyl lysine isopeptide (Lys-Gly) (interchain with G-Cter in SUMO2); alternate cross-link. Residues 394–414 (SSPSMRPDVSSPPSSSSTATT) are compositionally biased toward low complexity. The segment at 394 to 415 (SSPSMRPDVSSPPSSSSTATTG) is disordered. The residue at position 404 (serine 404) is a Phosphoserine. A Glycyl lysine isopeptide (Lys-Gly) (interchain with G-Cter in ubiquitin) cross-link involves residue lysine 419. 2 consecutive NR C4-type zinc fingers follow at residues 421–441 (CLVCSDEASGCHYGVLTCGSC) and 457–481 (CAGRNDCIIDKIRRKNCPACRYRKC). The nuclear receptor DNA-binding region spans 421 to 486 (CLVCSDEASG…RYRKCLQAGM (66 aa)). Residues lysine 480, lysine 492, lysine 494, and lysine 495 each carry the N6-acetyllysine modification. Positions 485–777 (GMNLEARKTK…NIKKLLFHQK (293 aa)) are interaction with CLOCK. The interval 487-523 (NLEARKTKKKIKGIQQATTGVSQETSENPANKTIVPA) is hinge. An NR LBD domain is found at 524 to 758 (TLPQLTPTLV…FPEMLAEIIT (235 aa)). Residues 532–697 (LVSLLEVIEP…EIRMTYIKEL (166 aa)) are interaction with CRY1. Lysine 703 is covalently cross-linked (Glycyl lysine isopeptide (Lys-Gly) (interchain with G-Cter in SUMO)).

The protein belongs to the nuclear hormone receptor family. NR3 subfamily. Heteromultimeric cytoplasmic complex with HSP90AA1, HSPA1A/HSPA1B, and FKBP5 or another immunophilin such as PPID, STIP1, or the immunophilin homolog PPP5C. Upon ligand binding FKBP5 dissociates from the complex and FKBP4 takes its place, thereby linking the complex to dynein and mediating transport to the nucleus, where the complex dissociates. Probably forms a complex composed of chaperones HSP90 and HSP70, co-chaperones CDC37, PPP5C, TSC1 and client protein TSC2, CDK4, AKT, RAF1 and NR3C1; this complex does not contain co-chaperones STIP1/HOP and PTGES3/p23. Directly interacts with UNC45A. Binds to DNA as a homodimer, and as heterodimer with NR3C2 or the retinoid X receptor. Binds STAT5A and STAT5B homodimers and heterodimers. Interacts with NRIP1, POU2F1, POU2F2 and TRIM28. Interacts with several coactivator complexes, including the SMARCA4 complex, CREBBP/EP300, TADA2L (Ada complex) and p160 coactivators such as NCOA2 and NCOA6. Interaction with BAG1 inhibits transactivation. Interacts with HEXIM1 and TGFB1I1. Interacts with NCOA1. Interacts with NCOA3, SMARCA4, SMARCC1, SMARCD1, and SMARCE1. Interacts with CLOCK, CRY1 and CRY2 in a ligand-dependent fashion. Interacts with CIART. Interacts with RWDD3. Interacts with UBE2I/UBC9 and this interaction is enhanced in the presence of RWDD3. Interacts with GRIP1. Interacts with NR4A3 (via nuclear receptor DNA-binding domain), represses transcription activity of NR4A3 on the POMC promoter Nur response element (NurRE). Directly interacts with PNRC2 to attract and form a complex with UPF1 and DCP1A; the interaction leads to rapid mRNA degradation. Interacts with GSK3B. Interacts with FNIP1 and FNIP2. Interacts (via C-terminus) with HNRNPU (via C-terminus). Interacts with MCM3AP. Interacts (via domain NR LBD) with HSP90AA1 and HSP90AB1. In the absence of hormonal ligand, interacts with TACC1. Interacts (via NR LBD domain) with ZNF764 (via KRAB domain); the interaction regulates transcription factor activity of NR3C1 by directing its actions toward certain biologic pathways. In terms of processing, acetylation by CLOCK reduces its binding to glucocorticoid response elements and its transcriptional activity. Increased proteasome-mediated degradation in response to glucocorticoids. Post-translationally, phosphorylated in the absence of hormone; becomes hyperphosphorylated in the presence of glucocorticoid. The Ser-203, Ser-226 and Ser-404-phosphorylated forms are mainly cytoplasmic, and the Ser-211-phosphorylated form is nuclear. Phosphorylation at Ser-211 increases transcriptional activity. Phosphorylation at Ser-203, Ser-226 and Ser-404 decreases signaling capacity. Phosphorylation at Ser-404 may protect from glucocorticoid-induced apoptosis. Phosphorylation at Ser-203 and Ser-211 is not required in regulation of chromosome segregation. May be dephosphorylated by PPP5C, attenuates NR3C1 action. In terms of processing, ubiquitinated by UBR5, leading to its degradation: UBR5 specifically recognizes and binds ligand-bound NR3C1 when it is not associated with coactivators (NCOAs). In presence of NCOAs, the UBR5-degron is not accessible, preventing its ubiquitination and degradation. Sumoylation at Lys-277 and Lys-293 negatively regulates its transcriptional activity. Sumoylation at Lys-703 positively regulates its transcriptional activity in the presence of RWDD3. Sumoylation at Lys-277 and Lys-293 is dispensable whereas sumoylation at Lys-703 is critical for the stimulatory effect of RWDD3 on its transcriptional activity. Heat shock increases sumoylation in a RWWD3-dependent manner.

It is found in the cytoplasm. The protein localises to the nucleus. Its subcellular location is the mitochondrion. The protein resides in the cytoskeleton. It localises to the spindle. It is found in the microtubule organizing center. The protein localises to the centrosome. Its subcellular location is the chromosome. The protein resides in the nucleoplasm. Its function is as follows. Receptor for glucocorticoids (GC). Has a dual mode of action: as a transcription factor that binds to glucocorticoid response elements (GRE), both for nuclear and mitochondrial DNA, and as a modulator of other transcription factors. Affects inflammatory responses, cellular proliferation and differentiation in target tissues. Involved in chromatin remodeling. Plays a role in rapid mRNA degradation by binding to the 5' UTR of target mRNAs and interacting with PNRC2 in a ligand-dependent manner which recruits the RNA helicase UPF1 and the mRNA-decapping enzyme DCP1A, leading to RNA decay. Could act as a coactivator for STAT5-dependent transcription upon growth hormone (GH) stimulation and could reveal an essential role of hepatic GR in the control of body growth. Mediates glucocorticoid-induced apoptosis. Promotes accurate chromosome segregation during mitosis. May act as a tumor suppressor. May play a negative role in adipogenesis through the regulation of lipolytic and antilipogenic gene expression. The chain is Glucocorticoid receptor (NR3C1) from Aotus nancymaae (Ma's night monkey).